We begin with the raw amino-acid sequence, 435 residues long: Tol-Pal system protein TolB (435 aa).

A signal peptide spans 1–20 (MRKIIAGVFIFVFLISNLYA).

The protein belongs to the TolB family. As to quaternary structure, the Tol-Pal system is composed of five core proteins: the inner membrane proteins TolA, TolQ and TolR, the periplasmic protein TolB and the outer membrane protein Pal. They form a network linking the inner and outer membranes and the peptidoglycan layer.

It is found in the periplasm. Its function is as follows. Part of the Tol-Pal system, which plays a role in outer membrane invagination during cell division and is important for maintaining outer membrane integrity. The protein is Tol-Pal system protein TolB of Francisella tularensis subsp. tularensis (strain WY96-3418).